The following is a 652-amino-acid chain: Proline-rich receptor-like protein kinase PERK1 (652 aa).

The disordered stretch occupies residues M1–S137. The Extracellular segment spans residues M1 to G139. The segment covering G8 to P19 has biased composition (pro residues). N-linked (GlcNAc...) asparagine glycosylation is found at N21 and N50. The segment covering T26–T112 has biased composition (pro residues). A compositionally biased stretch (low complexity) spans P113 to S137. Residues V140–L160 traverse the membrane as a helical segment. Over L161–L652 the chain is Cytoplasmic. The tract at residues R169 to V251 is disordered. The segment covering N203–V213 has biased composition (polar residues). The segment covering L216–A236 has biased composition (pro residues). The residue at position 269 (T269) is a Phosphothreonine. A Protein kinase domain is found at F280–L559. Residues L286 to V294 and K308 contribute to the ATP site. Y353 bears the Phosphotyrosine mark. The active-site Proton acceptor is D404. Phosphoserine is present on residues S408 and S437. T438 and T443 each carry phosphothreonine. Y451 carries the phosphotyrosine modification. Polar residues predominate over residues Y605–S616. The segment at Y605–L652 is disordered.

This sequence belongs to the protein kinase superfamily. Ser/Thr protein kinase family. Mostly expressed in inflorescence bolt, flower buds and siliques, and, to a lower extent, in roots, seedlings and leaves.

The protein resides in the cell membrane. The enzyme catalyses L-seryl-[protein] + ATP = O-phospho-L-seryl-[protein] + ADP + H(+). The catalysed reaction is L-threonyl-[protein] + ATP = O-phospho-L-threonyl-[protein] + ADP + H(+). This Arabidopsis thaliana (Mouse-ear cress) protein is Proline-rich receptor-like protein kinase PERK1 (PERK1).